The chain runs to 385 residues: Single-stranded DNA-binding protein 4 (385 aa).

Met1 carries the post-translational modification N-acetylmethionine. The 33-residue stretch at Ala17–Lys49 folds into the LisH domain. Disordered stretches follow at residues Phe122–Glu287 and Gly331–Ala363. Over residues Ser245 to Gly263 the composition is skewed to low complexity. Residues Gly267–Pro277 are compositionally biased toward pro residues. Ser341 bears the Phosphoserine mark. The residue at position 355 (Thr355) is a Phosphothreonine.

The protein localises to the nucleus. This is Single-stranded DNA-binding protein 4 (SSBP4) from Homo sapiens (Human).